A 148-amino-acid chain; its full sequence is Deoxyuridine 5'-triphosphate nucleotidohydrolase (148 aa).

Residues 68–70 (RSG), asparagine 81, 85–87 (TID), and lysine 95 contribute to the substrate site.

This sequence belongs to the dUTPase family. It depends on Mg(2+) as a cofactor.

The catalysed reaction is dUTP + H2O = dUMP + diphosphate + H(+). The protein operates within pyrimidine metabolism; dUMP biosynthesis; dUMP from dCTP (dUTP route): step 2/2. This enzyme is involved in nucleotide metabolism: it produces dUMP, the immediate precursor of thymidine nucleotides and it decreases the intracellular concentration of dUTP so that uracil cannot be incorporated into DNA. The protein is Deoxyuridine 5'-triphosphate nucleotidohydrolase of Rickettsia prowazekii (strain Madrid E).